The following is a 219-amino-acid chain: 2-C-methyl-D-erythritol 4-phosphate cytidylyltransferase (219 aa).

Belongs to the IspD/TarI cytidylyltransferase family. IspD subfamily.

The enzyme catalyses 2-C-methyl-D-erythritol 4-phosphate + CTP + H(+) = 4-CDP-2-C-methyl-D-erythritol + diphosphate. The protein operates within isoprenoid biosynthesis; isopentenyl diphosphate biosynthesis via DXP pathway; isopentenyl diphosphate from 1-deoxy-D-xylulose 5-phosphate: step 2/6. Its function is as follows. Catalyzes the formation of 4-diphosphocytidyl-2-C-methyl-D-erythritol from CTP and 2-C-methyl-D-erythritol 4-phosphate (MEP). This chain is 2-C-methyl-D-erythritol 4-phosphate cytidylyltransferase, found in Chlamydia trachomatis serovar L2 (strain ATCC VR-902B / DSM 19102 / 434/Bu).